The following is a 484-amino-acid chain: MNREQIHILFFPFMAHGHMIPLLDMAKLFARRGAKSTLLTTPINAKILEKPIEAFKVQNPDLEIGIKILNFPCVELGLPEGCENRDFINSYQKSDSFDLFLKFLFSTKYMKQQLESFIETTKPSALVADMFFPWATESAEKIGVPRLVFHGTSSFALCCSYNMRIHKPHKKVASSSTPFVIPGLPGDIVITEDQANVTNEETPFGKFWKEVRESETSSFGVLVNSFYELESSYADFYRSFVAKKAWHIGPLSLSNRGIAEKAGRGKKANIDEQECLKWLDSKTPGSVVYLSFGSGTGLPNEQLLEIAFGLEGSGQNFIWVVSKNENQVGTGENEDWLPKGFEERNKGKGLIIRGWAPQVLILDHKAIGGFVTHCGWNSTLEGIAAGLPMVTWPMGAEQFYNEKLLTKVLRIGVNVGATELVKKGKLISRAQVEKAVREVIGGEKAEERRLRAKELGEMAKAAVEEGGSSYNDVNKFMEELNGRK.

Residue His18 is the Proton acceptor of the active site. An anthocyanidin is bound by residues His18 and Asn89. The Charge relay role is filled by Asp129. Positions 356, 358, 373, 376, 377, 378, and 381 each coordinate UDP-alpha-D-glucose. Ala396 contacts an anthocyanidin. UDP-alpha-D-glucose contacts are provided by Glu397 and Gln398.

The protein belongs to the UDP-glycosyltransferase family. Specifically expressed in roots.

It catalyses the reaction a flavonol + UDP-alpha-D-glucose = a flavonol 3-O-beta-D-glucoside + UDP + H(+). In terms of biological role, possesses quercetin 3-O-glucosyltransferase and low 7-O-glucosyltransferase activities in vitro. Also active in vitro on benzoates and benzoate derivatives. Can detoxify the explosive 2,4,6-trinitrotoluene in plant by forming O- or C-glucose conjugates. The protein is UDP-glycosyltransferase 73B4 (UGT73B4) of Arabidopsis thaliana (Mouse-ear cress).